The following is a 217-amino-acid chain: MDQQGQSSAMNYGSNPYQTNAMTTTPTGSDHPAYHQIHQQQQQQLTQQLQSFWETQFKEIEKTTDFKNHSLPLARIKKIMKADEDVRMISAEAPVVFARACEMFILELTLRSWNHTEENKRRTLQKNDIAAAVTRTDIFDFLVDIVPREDLRDEVLGGVGAEAATAAGYPYGYLPPGTAPIGNPGMVMGNPGAYPPNPYMGQPMWQQPGPEQQDPDN.

Over residues 1–28 (MDQQGQSSAMNYGSNPYQTNAMTTTPTG) the composition is skewed to polar residues. Disordered regions lie at residues 1–29 (MDQQ…PTGS) and 198–217 (PYMG…DPDN).

It belongs to the NFYC/HAP5 subunit family. Heterotrimeric transcription factor composed of three components, NF-YA, NF-YB and NF-YC. NF-YB and NF-YC must interact and dimerize for NF-YA association and DNA binding. Ubiquitous.

It localises to the nucleus. In terms of biological role, stimulates the transcription of various genes by recognizing and binding to a CCAAT motif in promoters. The sequence is that of Nuclear transcription factor Y subunit C-3 (NFYC3) from Arabidopsis thaliana (Mouse-ear cress).